The following is a 134-amino-acid chain: ATP synthase epsilon chain, chloroplastic (134 aa).

Belongs to the ATPase epsilon chain family. As to quaternary structure, F-type ATPases have 2 components, CF(1) - the catalytic core - and CF(0) - the membrane proton channel. CF(1) has five subunits: alpha(3), beta(3), gamma(1), delta(1), epsilon(1). CF(0) has three main subunits: a, b and c.

It is found in the plastid. The protein localises to the chloroplast thylakoid membrane. In terms of biological role, produces ATP from ADP in the presence of a proton gradient across the membrane. In Phalaenopsis aphrodite subsp. formosana (Moth orchid), this protein is ATP synthase epsilon chain, chloroplastic.